The chain runs to 248 residues: Adenosylcobinamide-GDP ribazoletransferase (248 aa).

Helical transmembrane passes span 24-44 (EINLKKGSALLPFVGVIIGAW), 70-90 (IIITGGFHVDALADTADGLFS), 106-126 (VGANGVIAICFYFLFYGSLFL), 134-154 (IGWLFFVLPIVAKGVTMLLFA), 168-188 (IFLGVPWWPVVIAQVIVLVAL), 189-209 (GAFFSYIGVIAYAGVILFTII), and 228-248 (AGGQMGQLICLFCLVLLWGLI).

The protein belongs to the CobS family. The cofactor is Mg(2+).

Its subcellular location is the cell membrane. The enzyme catalyses alpha-ribazole + adenosylcob(III)inamide-GDP = adenosylcob(III)alamin + GMP + H(+). It carries out the reaction alpha-ribazole 5'-phosphate + adenosylcob(III)inamide-GDP = adenosylcob(III)alamin 5'-phosphate + GMP + H(+). It participates in cofactor biosynthesis; adenosylcobalamin biosynthesis; adenosylcobalamin from cob(II)yrinate a,c-diamide: step 7/7. Joins adenosylcobinamide-GDP and alpha-ribazole to generate adenosylcobalamin (Ado-cobalamin). Also synthesizes adenosylcobalamin 5'-phosphate from adenosylcobinamide-GDP and alpha-ribazole 5'-phosphate. This is Adenosylcobinamide-GDP ribazoletransferase from Listeria monocytogenes serotype 4b (strain F2365).